The primary structure comprises 234 residues: UDP-2,3-diacylglucosamine hydrolase (234 aa).

5 residues coordinate Mn(2+): D9, H11, D42, N80, and H115. 80-81 is a binding site for substrate; that stretch reads NR. Residues D123, S161, K165, K168, and H196 each contribute to the substrate site. H196 and H198 together coordinate Mn(2+).

The protein belongs to the LpxH family. Mn(2+) is required as a cofactor.

The protein resides in the cell inner membrane. It catalyses the reaction UDP-2-N,3-O-bis[(3R)-3-hydroxytetradecanoyl]-alpha-D-glucosamine + H2O = 2-N,3-O-bis[(3R)-3-hydroxytetradecanoyl]-alpha-D-glucosaminyl 1-phosphate + UMP + 2 H(+). It functions in the pathway glycolipid biosynthesis; lipid IV(A) biosynthesis; lipid IV(A) from (3R)-3-hydroxytetradecanoyl-[acyl-carrier-protein] and UDP-N-acetyl-alpha-D-glucosamine: step 4/6. Its function is as follows. Hydrolyzes the pyrophosphate bond of UDP-2,3-diacylglucosamine to yield 2,3-diacylglucosamine 1-phosphate (lipid X) and UMP by catalyzing the attack of water at the alpha-P atom. Involved in the biosynthesis of lipid A, a phosphorylated glycolipid that anchors the lipopolysaccharide to the outer membrane of the cell. This Haemophilus ducreyi (strain 35000HP / ATCC 700724) protein is UDP-2,3-diacylglucosamine hydrolase.